The following is a 309-amino-acid chain: Tumor necrosis factor ligand superfamily member 9 (309 aa).

Basic and acidic residues predominate over residues 1–16 (MDQHTLDVEDTADARH). Residues 1 to 20 (MDQHTLDVEDTADARHPAGT) form a disordered region. The Cytoplasmic portion of the chain corresponds to 1-82 (MDQHTLDVED…ALNFCSRHPK (82 aa)). Residues 83 to 103 (LYGLVALVLLLLIAACVPIFT) form a helical; Signal-anchor for type II membrane protein membrane-spanning segment. Residues 104 to 309 (RTEPRPALTI…FLVKPDNPWE (206 aa)) lie on the Extracellular side of the membrane. 3 N-linked (GlcNAc...) asparagine glycosylation sites follow: asparagine 139, asparagine 161, and asparagine 293. Residues 147–302 (VFAKLLAKNQ…NTTSFGLFLV (156 aa)) form the THD domain.

The protein belongs to the tumor necrosis factor family. Homotrimer.

The protein localises to the membrane. In terms of biological role, cytokine that binds to TNFRSF9. Induces the proliferation of activated peripheral blood T-cells. May have a role in activation-induced cell death (AICD). May play a role in cognate interactions between T-cells and B-cells/macrophages. In Mus musculus (Mouse), this protein is Tumor necrosis factor ligand superfamily member 9 (Tnfsf9).